Here is a 242-residue protein sequence, read N- to C-terminus: Probable transcriptional regulatory protein Bcep18194_A5621 (242 aa).

Belongs to the TACO1 family.

Its subcellular location is the cytoplasm. This Burkholderia lata (strain ATCC 17760 / DSM 23089 / LMG 22485 / NCIMB 9086 / R18194 / 383) protein is Probable transcriptional regulatory protein Bcep18194_A5621.